The following is a 497-amino-acid chain: Homeotic protein empty spiracles (497 aa).

Disordered stretches follow at residues 34–117 (NDVS…HLSP), 161–262 (SPLQ…MMMP), and 441–497 (NRRT…DASH). Positions 35 to 50 (DVSTAGGNSTPDLSGP) are enriched in polar residues. Pro residues predominate over residues 51-68 (QSPPPGERNVPGSPPQTP). A compositionally biased stretch (low complexity) spans 96–117 (PHAQQQQQQHLQAPHPHPHLSP). Polar residues predominate over residues 161 to 176 (SPLQTRLSPETEQPQM). Low complexity-rich tracts occupy residues 208 to 239 (PKSVSPQSSQPSSSPTLLISSPHATPPQQQQQ) and 248 to 262 (PAMMHPGGAGPMMMP). A DNA-binding region (homeobox) is located at residues 391 to 450 (PKRIRTAFSPSQLLKLEHAFESNQYVVGAERKALAQNLNLSETQVKVWFQNRRTKHKRMQ). The segment covering 470–497 (GDEDDDELIDMEMDECPSDEEHELDASH) has biased composition (acidic residues).

The protein belongs to the EMX homeobox family.

It localises to the nucleus. Its function is as follows. Acts as a homeotic selector gene controlling antennal and mandibular segment identity. This Drosophila melanogaster (Fruit fly) protein is Homeotic protein empty spiracles (ems).